Consider the following 661-residue polypeptide: Acyl-coenzyme A oxidase acox-1.2 (661 aa).

FAD-binding positions include 147-150 (YAQT), 155-156 (GS), and G189. Substrate contacts are provided by residues 283–286 (KIGY) and R293. FAD contacts are provided by residues R318 and 338 to 341 (QQHR). H340, S390, H394, and Q402 together coordinate ATP. FAD is bound at residue G409. A substrate-binding site is contributed by 431–432 (YE). E432 (proton acceptor) is an active-site residue. E434 is a binding site for FAD. ATP-binding positions include 525-528 (RASR) and Y573. The Microbody targeting signal motif lies at 659-661 (AKL).

The protein belongs to the acyl-CoA oxidase family. As to quaternary structure, homodimer. Forms a heterodimer with acox-1.1. FAD is required as a cofactor.

The protein localises to the peroxisome. The enzyme catalyses asc-omegaC5-CoA + O2 = asc-omegaDeltaC5-CoA + H2O2. The protein operates within lipid metabolism; peroxisomal fatty acid beta-oxidation. With respect to regulation, activated by ATP. ATP binding leads to a conformational change that promotes FAD cofactor binding and enzyme activity. ATP binding likely occurs during acox-1.2 folding and/or dimer formation. The preference for processing substrates with shorter fatty acid chains is likely due to the closed conformation of the active site. Functionally, involved in the first step of peroxisomal beta-oxidation by catalyzing the desaturation of fatty acid-derived side chains of ascaroside pheromones, which regulates development and behavior. Specifically, shortens ascarosides with 5-carbon omega side chain (asc-omega-C5). Does not shorten indol-3-carbonyl(IC)-ascaroside with 7-carbon or 9-carbon side chains. Does not catalyze the desaturation of fatty acids or hydroxylated fatty acids. This Caenorhabditis elegans protein is Acyl-coenzyme A oxidase acox-1.2.